A 551-amino-acid polypeptide reads, in one-letter code: MAASTSTRFLVLLKDFSAFRKISWTCAATNFHRQSRFLCHVAKEDGSLTLASLDLGNKPRKFGKGKAMKLEGSFVTEMGQGKVRAVKNDKMKVVKEKKPAEIVSPLFSAKSFEELGLPDSLLDSLEREGFSVPTDVQSAAVPAIIKGHDAVIQSYTGSGKTLAYLLPILSEIGPLAEKSRSSHSENDKRTEIQAMIVAPSRELGMQIVREVEKLLGPVHRRMVQQLVGGANRMRQEEALKKNKPAIVVGTPGRIAEISKGGKLHTHGCRFLVLDEVDELLSFNFREDIHRILEHVGKRSGAGPKGEVDERANRQTILVSATVPFSVIRAAKSWSHEPVLVQANKVTPLDTVQPSAPVMSLTPTTSEADGQIQTTIQSLPPALKHYYCISKHQHKVDTLRRCVHALDAQSVIAFMNHSRQLKDVVYKLEARGMNSAEMHGDLGKLGRSTVLKKFKNGEIKVLVTNELSARGLDVAECDLVVNLELPTDAVHYAHRAGRTGRLGRKGTVVTVCEESQVFIVKKMEKQLGLPFLYCEFVDGELVVTEEDKAIIR.

The transit peptide at 1–29 (MAASTSTRFLVLLKDFSAFRKISWTCAAT) directs the protein to the mitochondrion. A Q motif motif is present at residues 110–138 (KSFEELGLPDSLLDSLEREGFSVPTDVQS). The Helicase ATP-binding domain occupies 141–340 (VPAIIKGHDA…KSWSHEPVLV (200 aa)). Position 154–161 (154–161 (SYTGSGKT)) interacts with ATP. The DEAD box signature appears at 274 to 277 (DEVD). Positions 397-548 (TLRRCVHALD…ELVVTEEDKA (152 aa)) constitute a Helicase C-terminal domain.

It belongs to the DEAD box helicase family. Mostly expressed in leaves and flowers, and, to a lower extent, in roots, seedlings and siliques, especially in meristematic regions.

It localises to the mitochondrion. The enzyme catalyses ATP + H2O = ADP + phosphate + H(+). Essential protein required during embryogenesis. Required for mitochondrial metabolism. Necessary for normal plasmodesmata (PD) development and aperture regulation. The sequence is that of DEAD-box ATP-dependent RNA helicase 47, mitochondrial (RH47) from Arabidopsis thaliana (Mouse-ear cress).